The sequence spans 597 residues: Hydrogenase-1 large chain (597 aa).

Cysteine 76, cysteine 79, cysteine 576, and cysteine 579 together coordinate Ni(2+).

Belongs to the [NiFe]/[NiFeSe] hydrogenase large subunit family. Heterodimer of a large and a small subunit. It depends on Ni(2+) as a cofactor.

It is found in the cell membrane. The enzyme catalyses H2 + A = AH2. In Citrobacter freundii, this protein is Hydrogenase-1 large chain (hyaB).